A 312-amino-acid polypeptide reads, in one-letter code: Ribosomal RNA small subunit methyltransferase H (312 aa).

S-adenosyl-L-methionine is bound by residues 34 to 36 (AGH), Asp-54, Phe-81, Asp-102, and Gln-109.

This sequence belongs to the methyltransferase superfamily. RsmH family.

The protein localises to the cytoplasm. It catalyses the reaction cytidine(1402) in 16S rRNA + S-adenosyl-L-methionine = N(4)-methylcytidine(1402) in 16S rRNA + S-adenosyl-L-homocysteine + H(+). Functionally, specifically methylates the N4 position of cytidine in position 1402 (C1402) of 16S rRNA. The sequence is that of Ribosomal RNA small subunit methyltransferase H from Geotalea daltonii (strain DSM 22248 / JCM 15807 / FRC-32) (Geobacter daltonii).